A 1785-amino-acid chain; its full sequence is BCL-6 corepressor-like protein 1 (1785 aa).

Disordered stretches follow at residues 65–101 (VGSG…KMDY), 113–137 (VPLS…NSRA), and 343–368 (ASTP…GPPS). Over residues 83 to 97 (KLGHKSEDKPDDPQP) the composition is skewed to basic and acidic residues. S496 is modified (phosphoserine). Polar residues-rich tracts occupy residues 527-539 (PCTS…TTQP) and 586-600 (GTEQ…TFSP). Disordered stretches follow at residues 527-550 (PCTS…PLAD) and 562-646 (PTPQ…PMPV). Phosphoserine occurs at positions 599 and 613. K747 participates in a covalent cross-link: Glycyl lysine isopeptide (Lys-Gly) (interchain with G-Cter in SUMO2). 3 disordered regions span residues 753–781 (IIDQ…QPST), 876–901 (SSSE…EQDP), and 937–977 (VQPS…LKLA). 2 positions are modified to phosphoserine: S1029 and S1033. A Glycyl lysine isopeptide (Lys-Gly) (interchain with G-Cter in SUMO2) cross-link involves residue K1092. Disordered stretches follow at residues 1107 to 1293 (PDDV…QGRR) and 1312 to 1487 (WDTN…PEAR). S1162 is subject to Phosphoserine. Residues 1176 to 1185 (VRGKHKHRKP) show a composition bias toward basic residues. A compositionally biased stretch (basic and acidic residues) spans 1195 to 1213 (KRADSHEEGSLEKKAKSSF). Positions 1222–1234 (STRTRSQSGSICS) are enriched in polar residues. Residues 1271–1284 (TQRDTQYRSHHAQD) are compositionally biased toward basic and acidic residues. Residues 1314–1324 (TNEEEEEEEEE) are compositionally biased toward acidic residues. The Nuclear localization signal motif lies at 1328–1336 (KRKKRRRQK). The span at 1328–1339 (KRKKRRRQKSRK) shows a compositional bias: basic residues. The span at 1352-1363 (EQRRKGRADLKA) shows a compositional bias: basic and acidic residues. The span at 1440-1449 (WSQQKTRSPK) shows a compositional bias: polar residues. Residues 1461 to 1480 (TPSKSRSASSEEASESPTAR) are compositionally biased toward low complexity. Phosphoserine is present on S1476. 3 ANK repeats span residues 1529 to 1558 (AGYT…NVNC), 1562 to 1591 (DGTR…DPTL), and 1595 to 1623 (SGQT…QGRA). The interval 1668–1785 (DDFMFELSDK…SEVEFQSCNS (118 aa)) is PCGF Ub-like fold domain (PUFD); required for the interaction with the KDM2B-SKP1 heterodimeric complex.

The protein belongs to the BCOR family. In terms of assembly, interacts with PCGF1, forming heterodimers. The PCGF1-BCORL1 heterodimeric complex interacts with the KDM2B-SKP1 heterodimeric complex to form a homotetrameric polycomb repression complex 1 (PRC1.1). Interacts with SKP1. Interacts with CTBP1, HDAC4, HDAC5 and HDAC7. In terms of tissue distribution, detected in testis and prostate. Detected at lower levels in peripheral blood leukocytes and spleen. Mainly expressed in the spermatogonia and primary spermatocytes.

The protein resides in the nucleus. In terms of biological role, transcriptional corepressor. May specifically inhibit gene expression when recruited to promoter regions by sequence-specific DNA-binding proteins such as BCL6. This repression may be mediated at least in part by histone deacetylase activities which can associate with this corepressor. The polypeptide is BCL-6 corepressor-like protein 1 (Homo sapiens (Human)).